A 275-amino-acid chain; its full sequence is HUWE1-associated protein modifying stress responses (275 aa).

A compositionally biased stretch (acidic residues) spans 32-44; sequence AEQDEQLSPELQE. 4 disordered regions span residues 32–51, 155–181, 204–228, and 250–275; these read AEQDEQLSPELQEEAAAAAQ, RNSRAPPRLTVVSPNRATSTETSSSVE, SVRSSTPGSPTHVSSGPNASRRRNG, and GTRKRTSAQCGDVITDSPTHKRNRML. S167 carries the phosphoserine modification. The segment covering 172–181 has biased composition (low complexity); sequence TSTETSSSVE. Residues 204–221 show a composition bias toward polar residues; that stretch reads SVRSSTPGSPTHVSSGPN. S212 is modified (phosphoserine).

Belongs to the HAPSTR1 family. As to quaternary structure, homooligomer. Heterooligomer with HAPSTR2; the interaction is direct and stabilizes HAPSTR1. Interacts with HUWE1. In terms of processing, ubiquitinated by HUWE1. Promotes HAPSTR1 degradation through polyubiquitination.

The protein localises to the nucleus. The protein resides in the cytoplasm. Its function is as follows. Acts as a central player within a network of stress response pathways promoting cellular adaptability. The E3 ligase HUWE1 assists HAPSTR1 in controlling stress signaling and in turn, HUWE1 feeds back to promote the degradation of HAPSTR1. HAPSTR1 represents a central coordination mechanism for stress response programs. Functions as a negative regulator of TP53/P53 in the cellular response to telomere erosion and probably also DNA damage. May attenuate p53/TP53 activation through the E3 ubiquitin ligase HUWE1. In Mus musculus (Mouse), this protein is HUWE1-associated protein modifying stress responses.